The chain runs to 177 residues: Large ribosomal subunit protein uL6 (177 aa).

Belongs to the universal ribosomal protein uL6 family. As to quaternary structure, part of the 50S ribosomal subunit.

This protein binds to the 23S rRNA, and is important in its secondary structure. It is located near the subunit interface in the base of the L7/L12 stalk, and near the tRNA binding site of the peptidyltransferase center. In Rhodopseudomonas palustris (strain BisB18), this protein is Large ribosomal subunit protein uL6.